The primary structure comprises 231 residues: 5'-methylthioadenosine/S-adenosylhomocysteine nucleosidase (231 aa).

E12 (proton acceptor) is an active-site residue. Substrate is bound by residues G78, I153, and 174 to 175; that span reads ME. Catalysis depends on D198, which acts as the Proton donor.

The protein belongs to the PNP/UDP phosphorylase family. MtnN subfamily.

It carries out the reaction S-adenosyl-L-homocysteine + H2O = S-(5-deoxy-D-ribos-5-yl)-L-homocysteine + adenine. It catalyses the reaction S-methyl-5'-thioadenosine + H2O = 5-(methylsulfanyl)-D-ribose + adenine. The enzyme catalyses 5'-deoxyadenosine + H2O = 5-deoxy-D-ribose + adenine. It participates in amino-acid biosynthesis; L-methionine biosynthesis via salvage pathway; S-methyl-5-thio-alpha-D-ribose 1-phosphate from S-methyl-5'-thioadenosine (hydrolase route): step 1/2. Functionally, catalyzes the irreversible cleavage of the glycosidic bond in both 5'-methylthioadenosine (MTA) and S-adenosylhomocysteine (SAH/AdoHcy) to adenine and the corresponding thioribose, 5'-methylthioribose and S-ribosylhomocysteine, respectively. Also cleaves 5'-deoxyadenosine, a toxic by-product of radical S-adenosylmethionine (SAM) enzymes, into 5-deoxyribose and adenine. The polypeptide is 5'-methylthioadenosine/S-adenosylhomocysteine nucleosidase (Maridesulfovibrio salexigens (strain ATCC 14822 / DSM 2638 / NCIMB 8403 / VKM B-1763) (Desulfovibrio salexigens)).